The following is a 146-amino-acid chain: Large ribosomal subunit protein bL21 (146 aa).

Residues 96–146 are disordered; that stretch reads KKKTRRKMGHRQELTRVMVKSISITNSTPKTSSKTEVKKKSTSPKASNPEN.

This sequence belongs to the bacterial ribosomal protein bL21 family. As to quaternary structure, part of the 50S ribosomal subunit. Contacts protein L20.

This protein binds to 23S rRNA in the presence of protein L20. This Prochlorococcus marinus subsp. pastoris (strain CCMP1986 / NIES-2087 / MED4) protein is Large ribosomal subunit protein bL21.